The chain runs to 128 residues: Ig kappa chain V-V region T1 (128 aa).

Positions 1-20 (MRTPAQFLGILLLWFPGIKC) are cleaved as a signal peptide. A framework-1 region spans residues 21–43 (DIKMTQSPSSMYASLGERVTISC). C43 and C108 are oxidised to a cystine. The interval 44-54 (KASQDINSYLT) is complementarity-determining-1. Residues 55-69 (WFQQKPGKSPKTLLY) form a framework-2 region. Positions 70-76 (RANRLVD) are complementarity-determining-2. The framework-3 stretch occupies residues 77-108 (GVPSRFSGSGSGQDFSLTISSLEYEDMGIYYC). Positions 109-117 (LQYDEFPLT) are complementarity-determining-3. The tract at residues 118–127 (FGAGTKLELK) is framework-4.

This Mus musculus (Mouse) protein is Ig kappa chain V-V region T1.